Reading from the N-terminus, the 126-residue chain is Aspartate 1-decarboxylase (126 aa).

Ser-25 acts as the Schiff-base intermediate with substrate; via pyruvic acid in catalysis. Ser-25 is modified (pyruvic acid (Ser)). Thr-57 lines the substrate pocket. Tyr-58 acts as the Proton donor in catalysis. 73–75 (GGA) lines the substrate pocket.

Belongs to the PanD family. As to quaternary structure, heterooctamer of four alpha and four beta subunits. Requires pyruvate as cofactor. Is synthesized initially as an inactive proenzyme, which is activated by self-cleavage at a specific serine bond to produce a beta-subunit with a hydroxyl group at its C-terminus and an alpha-subunit with a pyruvoyl group at its N-terminus.

Its subcellular location is the cytoplasm. It carries out the reaction L-aspartate + H(+) = beta-alanine + CO2. The protein operates within cofactor biosynthesis; (R)-pantothenate biosynthesis; beta-alanine from L-aspartate: step 1/1. In terms of biological role, catalyzes the pyruvoyl-dependent decarboxylation of aspartate to produce beta-alanine. The sequence is that of Aspartate 1-decarboxylase from Xanthomonas campestris pv. campestris (strain B100).